The following is a 185-amino-acid chain: Ribosome-recycling factor (185 aa).

This sequence belongs to the RRF family.

It localises to the cytoplasm. In terms of biological role, responsible for the release of ribosomes from messenger RNA at the termination of protein biosynthesis. May increase the efficiency of translation by recycling ribosomes from one round of translation to another. This is Ribosome-recycling factor from Yersinia pseudotuberculosis serotype O:1b (strain IP 31758).